The following is an 845-amino-acid chain: Leucine--tRNA ligase (845 aa).

Positions 40 to 51 (PYPSGAGLHVGH) match the 'HIGH' region motif. Residues 623–627 (KMSKS) carry the 'KMSKS' region motif. Lys-626 contributes to the ATP binding site.

It belongs to the class-I aminoacyl-tRNA synthetase family.

The protein localises to the cytoplasm. The enzyme catalyses tRNA(Leu) + L-leucine + ATP = L-leucyl-tRNA(Leu) + AMP + diphosphate. This chain is Leucine--tRNA ligase, found in Protochlamydia amoebophila (strain UWE25).